We begin with the raw amino-acid sequence, 200 residues long: Claudin-11 (200 aa).

A topological domain (cytoplasmic) is located at residue Met-1. A helical transmembrane segment spans residues 2–22 (VATCLQVVGFVTSFVGWIGVI). The Extracellular portion of the chain corresponds to 23–75 (VTTSTNDWVVTCGYTIPTCRKLDELGSKGLWADCVMATGLYHCKPLVDILPCR). The chain crosses the membrane as a helical span at residues 76–96 (ALMIAASVLGLPAILLLLTVL). Residues 97 to 115 (PCIRMGQEPGVAKYRRAQL) are Cytoplasmic-facing. A helical membrane pass occupies residues 116–136 (AGVLLILLALCAIVATIWFPV). The Extracellular portion of the chain corresponds to 137-150 (CAHRETTIVSFGYS). The chain crosses the membrane as a helical span at residues 151–171 (LYAGWIGAVLCLVGGCVILCC). Residues 172–200 (AGDAQAFGENRFYYTAGSSSPTHAKSAHV) are Cytoplasmic-facing. Ser-190 and Ser-191 each carry phosphoserine.

Belongs to the claudin family. Interacts with tetraspanin-3/TSPAN3. Interacts with OCLN.

The protein resides in the cell junction. The protein localises to the tight junction. It is found in the cell membrane. Its function is as follows. Plays a major role in tight junction-specific obliteration of the intercellular space, through calcium-independent cell-adhesion activity. The sequence is that of Claudin-11 (CLDN11) from Pongo abelii (Sumatran orangutan).